We begin with the raw amino-acid sequence, 352 residues long: MSQTLTVPTLTLENGTTLRDVPVAYRTWGTLNATGTNAVLVCHALTGDTNVADWWGGLLGPGRALDPTEDFVVCLNVPGSPYGSVAPVTVNPDTGERYGAGFPPFTTRDTVRLHRRALETLGVQRVACAVGGSMGGMHVLEWAFEATDDGAPFVRSLVPIAVGGRHTAWQIGWGAAQRQAIFADPKWRDGTYPPDDPPTNGLATARMMAMVSYRSRPSLDGRFGRDAMPEQDGTPYAVESYLHHHGNKLVDRFDANCYVALTRQMDTHDVARGRGDYAKVLRAIEQPSLVVGIDSDVLYPLSEQEELAEHLPSATLEVLSAPHGHDTFLIELDALNDLVSTWRANICSSVAA.

In terms of domain architecture, AB hydrolase-1 spans 37–330; it reads NAVLVCHALT…APHGHDTFLI (294 aa). Serine 133 functions as the Nucleophile in the catalytic mechanism. Arginine 206 is a substrate binding site. Active-site residues include aspartate 296 and histidine 325. Aspartate 326 is a substrate binding site.

The protein belongs to the AB hydrolase superfamily. MetX family. Homodimer.

It is found in the cytoplasm. The enzyme catalyses L-homoserine + acetyl-CoA = O-acetyl-L-homoserine + CoA. It functions in the pathway amino-acid biosynthesis; L-methionine biosynthesis via de novo pathway; O-acetyl-L-homoserine from L-homoserine: step 1/1. Its function is as follows. Transfers an acetyl group from acetyl-CoA to L-homoserine, forming acetyl-L-homoserine. The sequence is that of Homoserine O-acetyltransferase from Salinibacter ruber (strain DSM 13855 / M31).